A 413-amino-acid chain; its full sequence is BEN domain-containing protein 7 (413 aa).

Glycyl lysine isopeptide (Lys-Gly) (interchain with G-Cter in SUMO2) cross-links involve residues lysine 16, lysine 56, and lysine 85. Positions 78 to 88 (GKEGEKLKEEP) are enriched in basic and acidic residues. 2 disordered regions span residues 78 to 153 (GKEG…GELP) and 208 to 243 (RTAVSRKRNKKKKVPPKTVEPLTVKQKPSGSEMEKK). Composition is skewed to polar residues over residues 99–111 (LNSSAEAPQSLHP) and 121–153 (PPQSGQFSGQYGTRSRTFQSQPHPTTSSNGELP). A compositionally biased stretch (basic residues) spans 211–222 (VSRKRNKKKKVP). Residues 223 to 232 (PKTVEPLTVK) show a composition bias toward low complexity. Lysine 243 participates in a covalent cross-link: Glycyl lysine isopeptide (Lys-Gly) (interchain with G-Cter in SUMO2). A BEN domain is found at 287–392 (GFDVFMPKSQ…IKLARRRLKR (106 aa)). Phosphothreonine is present on threonine 324. At serine 328 the chain carries Phosphoserine.

This Homo sapiens (Human) protein is BEN domain-containing protein 7 (BEND7).